An 87-amino-acid chain; its full sequence is Small ribosomal subunit protein uS17 (87 aa).

Belongs to the universal ribosomal protein uS17 family. As to quaternary structure, part of the 30S ribosomal subunit.

One of the primary rRNA binding proteins, it binds specifically to the 5'-end of 16S ribosomal RNA. The polypeptide is Small ribosomal subunit protein uS17 (Syntrophobacter fumaroxidans (strain DSM 10017 / MPOB)).